Here is a 409-residue protein sequence, read N- to C-terminus: Glycinol 4-dimethylallyltransferase (409 aa).

The N-terminal 44 residues, M1 to R44, are a transit peptide targeting the chloroplast. The next 9 membrane-spanning stretches (helical) occupy residues L113–F133, L148–L168, V200–W220, L222–L242, P249–F269, L287–I307, A330–A350, H354–Y374, and G388–I408.

The protein belongs to the UbiA prenyltransferase family. Requires Mg(2+) as cofactor. It depends on Mn(2+) as a cofactor. Co(2+) is required as a cofactor.

It localises to the plastid. The protein resides in the chloroplast membrane. It catalyses the reaction (6aS,11aS)-3,6a,9-trihydroxypterocarpan + dimethylallyl diphosphate = (6aS,11aS)-2-dimethylallyl-3,6a,9-trihydroxypterocarpan + diphosphate. It carries out the reaction (6aS,11aS)-3,6a,9-trihydroxypterocarpan + dimethylallyl diphosphate = (6aS,11aS)-4-dimethylallyl-3,6a,9-trihydroxypterocarpan + diphosphate. It participates in phytoalexin biosynthesis; pterocarpan phytoalexin biosynthesis. Its function is as follows. Proposed to be involved in the biosynthesis of pterocarpan phytoalexins, specifically glyceollins. Can act as a prenyltransferase towards glycinol which is the direct precursor of glyceollins. Seems to be specific for prenylation at C-4 thus producing glyceollin I. This is Glycinol 4-dimethylallyltransferase (G4DT) from Glycine max (Soybean).